Reading from the N-terminus, the 589-residue chain is Protein drl-1 (589 aa).

The tract at residues 1–51 (MHSEEKYLHIPNNTKYPEIIVEEEEEDPSEEERSELSETDDVATPLRPSDT) is disordered. A compositionally biased stretch (acidic residues) spans 20–41 (IVEEEEEDPSEEERSELSETDD). A Protein kinase domain is found at 97-373 (WRINEDVMKD…QNLLESHGSK (277 aa)). 3 consecutive transmembrane segments (helical) span residues 429 to 449 (GFIPFIRWYMSRILIFSVLLV), 456 to 476 (LCAALSLAAVAGGVFFAIFLI), and 491 to 511 (GFVVLIALILLPIIILLTTLC).

The protein belongs to the protein kinase superfamily. STE Ser/Thr protein kinase family. In terms of tissue distribution, expressed in vulval and body wall muscles, hypodermis, seam cells and tissues next to pharynx and anus.

It is found in the membrane. Negatively regulates lifespan and health span probably by participating in nutrient sensing. The protein is Protein drl-1 of Caenorhabditis elegans.